Consider the following 306-residue polypeptide: Anamorsin homolog (306 aa).

The segment covering 1-25 has biased composition (basic and acidic residues); sequence MVPPREDVTVRIVCERRRTAGKEAR. Residues 1–51 form a disordered region; that stretch reads MVPPREDVTVRIVCERRRTAGKEARPPPSAKPTPGNTSSHPNAKETHRSNE. An N-terminal SAM-like domain region spans residues 59 to 190; the sequence is KQSHRRSIMA…RRNNTTNSVA (132 aa). The interval 191–218 is linker; that stretch reads TLNFASNNNNGNDLLIDEDNLLTDASNL. Residues Cys-236, Cys-242, Cys-245, and Cys-247 each coordinate [2Fe-2S] cluster. Residues 236–247 form a fe-S binding site A region; the sequence is CSGRAPCDDCTC. Basic and acidic residues predominate over residues 252-265; it reads GAKEGNSEQPKEIK. The disordered stretch occupies residues 252 to 272; sequence GAKEGNSEQPKEIKSSSCGKC. Residues Cys-269, Cys-272, Cys-280, and Cys-283 each contribute to the [4Fe-4S] cluster site. 2 consecutive short sequence motifs (cx2C motif) follow at residues 269–272 and 280–283; these read CGKC and CASC. Positions 269 to 283 are fe-S binding site B; that stretch reads CGKCSLGDAFRCASC.

It belongs to the anamorsin family. As to quaternary structure, monomer. The cofactor is [2Fe-2S] cluster. [4Fe-4S] cluster is required as a cofactor.

It localises to the cytoplasm. The protein localises to the mitochondrion intermembrane space. In terms of biological role, component of the cytosolic iron-sulfur (Fe-S) protein assembly (CIA) machinery. Required for the maturation of extramitochondrial Fe-S proteins. Part of an electron transfer chain functioning in an early step of cytosolic Fe-S biogenesis, facilitating the de novo assembly of a [4Fe-4S] cluster on the cytosolic Fe-S scaffold complex. Electrons are transferred from NADPH via a FAD- and FMN-containing diflavin oxidoreductase. Together with the diflavin oxidoreductase, also required for the assembly of the diferric tyrosyl radical cofactor of ribonucleotide reductase (RNR), probably by providing electrons for reduction during radical cofactor maturation in the catalytic small subunit. This Phaeodactylum tricornutum (strain CCAP 1055/1) protein is Anamorsin homolog.